We begin with the raw amino-acid sequence, 184 residues long: Thymidine kinase (184 aa).

ATP is bound by residues 10 to 17 and 83 to 86; these read GPMYSGKT and DEVQ. Glutamate 84 serves as the catalytic Proton acceptor. Zn(2+) contacts are provided by cysteine 140, cysteine 143, cysteine 173, and cysteine 176.

Belongs to the thymidine kinase family. As to quaternary structure, homotetramer.

It is found in the cytoplasm. It catalyses the reaction thymidine + ATP = dTMP + ADP + H(+). The chain is Thymidine kinase from Thermotoga sp. (strain RQ2).